The sequence spans 506 residues: Epstein-Barr nuclear antigen leader protein (506 aa).

Disordered stretches follow at residues 1–470 (MGDR…PRPP) and 485–506 (FEPP…EDED). At serine 35 the chain carries Phosphoserine; by host.

The protein belongs to the lymphocryptovirus EBNA-LP family. Homooligomer. Interacts with host SP100; this interaction is important for EBNA-LP coactivator activity. Interacts with host HAX1, ERR1 and HSPA2. Interacts with host PRKDC and AKAP8L; these interactions modulate the coactivator function of EBNA-LP. Phosphorylated by the cellular protein kinase cdc2.

Its subcellular location is the host nucleus. In terms of biological role, plays an important role in the establishment of B-cell immortalization by acting as an EBNA2 coactivator. This transcriptional activation preferentially enhances the expression of the major viral protein LMP1. The interaction between EBNA-LP and host SP100 correlates with coactivation of EBNA2 and the relocalization of SP100 from PML nuclear bodies into nucleoplasm. This Epstein-Barr virus (strain B95-8) (HHV-4) protein is Epstein-Barr nuclear antigen leader protein (EBNA-LP).